Here is a 122-residue protein sequence, read N- to C-terminus: UPF0102 protein XAC0764 (122 aa).

The protein belongs to the UPF0102 family.

The chain is UPF0102 protein XAC0764 from Xanthomonas axonopodis pv. citri (strain 306).